The chain runs to 113 residues: Large ribosomal subunit protein uL22 (113 aa).

This sequence belongs to the universal ribosomal protein uL22 family. In terms of assembly, part of the 50S ribosomal subunit.

In terms of biological role, this protein binds specifically to 23S rRNA; its binding is stimulated by other ribosomal proteins, e.g. L4, L17, and L20. It is important during the early stages of 50S assembly. It makes multiple contacts with different domains of the 23S rRNA in the assembled 50S subunit and ribosome. The globular domain of the protein is located near the polypeptide exit tunnel on the outside of the subunit, while an extended beta-hairpin is found that lines the wall of the exit tunnel in the center of the 70S ribosome. This Thermus thermophilus (strain ATCC BAA-163 / DSM 7039 / HB27) protein is Large ribosomal subunit protein uL22.